A 316-amino-acid chain; its full sequence is Zinc finger protein 367 (316 aa).

Residues 61–97 (VTLGPGSGSGAASPTRTSSSPAEADPLSCPEHLKDGI) are disordered. The segment covering 70–82 (GAASPTRTSSSPA) has biased composition (low complexity). 2 C2H2-type zinc fingers span residues 121–143 (IRCN…KRTH) and 149–173 (YLCD…QRLH). A disordered region spans residues 234 to 294 (QTREQRSPVP…GGVVTARRRL (61 aa)). The segment covering 255–278 (EDQEQQDPLDFLPSDEGEEEEQEE) has biased composition (acidic residues). Residues 289–313 (TARRRLQEQRERLHGALALIELANN) are a coiled coil.

This sequence belongs to the krueppel C2H2-type zinc-finger protein family.

It localises to the nucleus. Its function is as follows. Transcriptional activator. The polypeptide is Zinc finger protein 367 (znf367) (Danio rerio (Zebrafish)).